The sequence spans 258 residues: Synapse differentiation-inducing gene protein 1 (258 aa).

Topologically, residues 1–181 are cytoplasmic; the sequence is MDGIIEQKSV…NFLMMPPRDH (181 aa). The residue at position 137 (Ser-137) is a Phosphoserine. Residues 182–202 form a helical membrane-spanning segment; it reads LGLSVFSMLCCFWPLGIAAFY. Over 203-228 the chain is Extracellular; the sequence is LSHETNKAVAKGDFHQASTSSRRALF. Positions 229-249 form an intramembrane region, helical; the sequence is LAVLSITIGTGIYVGVAVALI. Residues 250–258 lie on the Extracellular side of the membrane; the sequence is AYLSKNNHL.

It belongs to the CD225/Dispanin family. As to quaternary structure, homodimer. Interacts with GRIA1 and GRIA2. In terms of tissue distribution, brain-specific. Expressed in Purkinje neurons in cerebellum. Also detected in the hippocampus. Found at excitatory synapses and postsynaptic cells.

Its subcellular location is the cell membrane. The protein resides in the early endosome membrane. It localises to the postsynaptic density membrane. It is found in the synapse. The protein localises to the cell projection. Its subcellular location is the dendrite. The protein resides in the dendritic spine. May regulate AMPA receptor content at nascent synapses, and have a role in postsynaptic development and maturation. In Mus musculus (Mouse), this protein is Synapse differentiation-inducing gene protein 1 (Syndig1).